Reading from the N-terminus, the 205-residue chain is DNA-directed RNA polymerase RPB5 homolog (205 aa).

Belongs to the archaeal RpoH/eukaryotic RPB5 RNA polymerase subunit family. As to quaternary structure, part of the viral DNA-directed RNA polymerase that consists of 8 polII-like subunits (RPB1, RPB2, RPB3, RPB5, RPB6, RPB7, RPB9, RPB10), a capping enzyme and a termination factor.

It is found in the host cytoplasm. The protein localises to the virion. Functionally, component of the DNA-directed RNA polymerase (RNAP) that catalyzes the transcription in the cytoplasm of viral DNA into RNA using the four ribonucleoside triphosphates as substrates. This Ornithodoros (relapsing fever ticks) protein is DNA-directed RNA polymerase RPB5 homolog.